Consider the following 792-residue polypeptide: G-type lectin S-receptor-like serine/threonine-protein kinase At1g61440 (792 aa).

The N-terminal stretch at 1–17 is a signal peptide; it reads MGKKRIVLLLFISFSYA. A Bulb-type lectin domain is found at 18–137; it reads EITKESPLSI…VTGRTLWESF (120 aa). Over 18–419 the chain is Extracellular; the sequence is EITKESPLSI…ELDVHKRKMT (402 aa). 3 N-linked (GlcNAc...) asparagine glycosylation sites follow: asparagine 46, asparagine 127, and asparagine 229. Residues 271 to 307 form the EGF-like; atypical domain; the sequence is PANSCDIYGVCGPFGFCVISDPPKCKCFKGFVPKSIE. 2 cysteine pairs are disulfide-bonded: cysteine 275–cysteine 287 and cysteine 281–cysteine 295. 3 N-linked (GlcNAc...) asparagine glycosylation sites follow: asparagine 313, asparagine 329, and asparagine 368. The PAN domain maps to 326-408; the sequence is CQGNSTGKDA…GEILSIRLAH (83 aa). 2 cysteine pairs are disulfide-bonded: cysteine 361–cysteine 382 and cysteine 365–cysteine 371. A helical membrane pass occupies residues 420–440; that stretch reads IVASTVSLTLFVILGFATFGF. Topologically, residues 441–792 are cytoplasmic; the sequence is WRNRVKHHDA…EMTESVILGR (352 aa). A Protein kinase domain is found at 478 to 763; sequence FSLSNKLGHG…DLPLPKQPTF (286 aa). Residues 484–492 and lysine 506 each bind ATP; that span reads LGHGGFGSV. Phosphoserine is present on residues serine 512 and serine 527. The tract at residues 567-584 is caM-binding; sequence RKRLELDWPKRFDIIQGI. Aspartate 603 (proton acceptor) is an active-site residue. Phosphoserine occurs at positions 607 and 620. Threonine 637 bears the Phosphothreonine mark. 2 positions are modified to phosphoserine: serine 680 and serine 774.

This sequence belongs to the protein kinase superfamily. Ser/Thr protein kinase family.

It localises to the cell membrane. It catalyses the reaction L-seryl-[protein] + ATP = O-phospho-L-seryl-[protein] + ADP + H(+). The enzyme catalyses L-threonyl-[protein] + ATP = O-phospho-L-threonyl-[protein] + ADP + H(+). This chain is G-type lectin S-receptor-like serine/threonine-protein kinase At1g61440, found in Arabidopsis thaliana (Mouse-ear cress).